A 414-amino-acid chain; its full sequence is Esterase FrsA (414 aa).

It belongs to the FrsA family.

It catalyses the reaction a carboxylic ester + H2O = an alcohol + a carboxylate + H(+). Its function is as follows. Catalyzes the hydrolysis of esters. The polypeptide is Esterase FrsA (Escherichia coli O17:K52:H18 (strain UMN026 / ExPEC)).